The following is a 187-amino-acid chain: Adenine phosphoribosyltransferase (187 aa).

It belongs to the purine/pyrimidine phosphoribosyltransferase family. As to quaternary structure, homodimer.

Its subcellular location is the cytoplasm. The catalysed reaction is AMP + diphosphate = 5-phospho-alpha-D-ribose 1-diphosphate + adenine. It functions in the pathway purine metabolism; AMP biosynthesis via salvage pathway; AMP from adenine: step 1/1. In terms of biological role, catalyzes a salvage reaction resulting in the formation of AMP, that is energically less costly than de novo synthesis. This is Adenine phosphoribosyltransferase from Yersinia pseudotuberculosis serotype O:3 (strain YPIII).